The primary structure comprises 277 residues: MNMNGFDPFEWRSFYFPGMSREDAHKLLGEPRVSIGTFLMRDSSQPGEYSLSVREADEGNTVCHYLIVRDVKEDGTAGVKIAEQSFPDIPALLNHFKMRVLTEASLLSAYKKPIIEVVVGTFKFTGERETDLPFEQGERLEILSKTNNDWWEARNALGTTGLVPANYVQVQSGEFANERISKGTSQSSIGSSGNGAERFSSTSTSSENAEAHPTLPTTAKVTFDRVPNAYDPTQLRVKKGQTVRVLEKMSNGMYRAELDGQIGSVPFTYIRFNTANQ.

Residues 14–112 (FYFPGMSRED…EASLLSAYKK (99 aa)) form the SH2 domain. The SH3 1 domain maps to 113–173 (PIIEVVVGTF…PANYVQVQSG (61 aa)). A disordered region spans residues 179–217 (RISKGTSQSSIGSSGNGAERFSSTSTSSENAEAHPTLPT). Over residues 182-206 (KGTSQSSIGSSGNGAERFSSTSTSS) the composition is skewed to low complexity. An SH3 2 domain is found at 214-275 (TLPTTAKVTF…PFTYIRFNTA (62 aa)).

Belongs to the CRK family. As to quaternary structure, interacts with ced-5 (via C-terminus which contains a candidate SH3-binding, proline-rich region). Forms a ternary complex with ced-5 and ced-12. Interacts (via SH-2 domain) with src-1 (when activated and phosphorylated at 'Tyr-416').

Required for cell migration and engulfment of cell corpses but not for programmed cell death/apoptosis. Also has a role in the migration of the 2 gonadal distal tip cells (DTCs). The polypeptide is Cell death abnormality protein 2 (Caenorhabditis briggsae).